The primary structure comprises 344 residues: MYKKKKSYQSLKNLNTFSINVTAKKIIFVKTIQSLMKIWKTCNLSNIPYIILGEGSNVLFLENYAGVVIINRIKGIRIEEKKKNWLLHVFSGEKWHDLVKYTLRMGFFGLENLALIPGSVGSAAIQNIGAYGLELKNICQYVDVISLENGKTIRLKKKTCNFSYRSSIFKYKYNNGYAVIAVGIKIKKNWKPVIFSSLLKSKKILEINAYKIFNIVCQIRKKKLPNLKKLGNAGSFFKNPIITSKKTKKILSSYMKMPYYIQKNGFIKIPAAWLIEKYNFKNIQIGDAAIYKKQKLILINLKKANSKDILKLAQIIQKCILKKFGIYLEPEVDFINSLGKVKLL.

An FAD-binding PCMH-type domain is found at 19–189 (INVTAKKIIF…IAVGIKIKKN (171 aa)). The active site involves Arg165. Catalysis depends on Ser235, which acts as the Proton donor. Glu331 is a catalytic residue.

The protein belongs to the MurB family. The cofactor is FAD.

The protein resides in the cytoplasm. The enzyme catalyses UDP-N-acetyl-alpha-D-muramate + NADP(+) = UDP-N-acetyl-3-O-(1-carboxyvinyl)-alpha-D-glucosamine + NADPH + H(+). It participates in cell wall biogenesis; peptidoglycan biosynthesis. Its function is as follows. Cell wall formation. This is UDP-N-acetylenolpyruvoylglucosamine reductase from Buchnera aphidicola subsp. Schizaphis graminum (strain Sg).